The primary structure comprises 217 residues: Adenylate kinase (217 aa).

Position 10–15 (10–15) interacts with ATP; that stretch reads GSGKGT. The tract at residues 30–59 is NMP; that stretch reads STGDLLRAAVAAGSELGKQAKAAMDAGELV. Residues T31, R36, 57–59, 85–88, and Q92 each bind AMP; these read ELV and GFPR. The tract at residues 126-164 is LID; it reads GRRTCQACGAIYNIYFSPPEVDHRCDKCNSDQLVQRSDD. R127 is a binding site for ATP. Zn(2+) is bound by residues C130 and C133. An ATP-binding site is contributed by 136 to 137; it reads IY. Positions 150 and 153 each coordinate Zn(2+). R161 and R172 together coordinate AMP. D200 contacts ATP.

Belongs to the adenylate kinase family. In terms of assembly, monomer.

The protein localises to the cytoplasm. The enzyme catalyses AMP + ATP = 2 ADP. The protein operates within purine metabolism; AMP biosynthesis via salvage pathway; AMP from ADP: step 1/1. Functionally, catalyzes the reversible transfer of the terminal phosphate group between ATP and AMP. Plays an important role in cellular energy homeostasis and in adenine nucleotide metabolism. The sequence is that of Adenylate kinase from Nitrosococcus oceani (strain ATCC 19707 / BCRC 17464 / JCM 30415 / NCIMB 11848 / C-107).